Here is a 365-residue protein sequence, read N- to C-terminus: Patr class I histocompatibility antigen, A-126 alpha chain (365 aa).

An N-terminal signal peptide occupies residues 1–24 (MAVMAPRTLVLLLSGALALTQTWA). Positions 25-114 (GSHSMRYFST…LRGYYNQSED (90 aa)) are alpha-1. The Extracellular portion of the chain corresponds to 25 to 308 (GSHSMRYFST…EPSSQPTIPI (284 aa)). The N-linked (GlcNAc...) asparagine glycan is linked to Asn110. An alpha-2 region spans residues 115–206 (GSHTIQLMFG…ENGKETLQRT (92 aa)). 2 disulfide bridges follow: Cys125-Cys188 and Cys227-Cys283. Residues 207 to 298 (DPPKTHMTHH…GLPKPLTLRW (92 aa)) form an alpha-3 region. An Ig-like C1-type domain is found at 209 to 295 (PKTHMTHHPI…QHEGLPKPLT (87 aa)). The interval 299 to 308 (EPSSQPTIPI) is connecting peptide. A helical membrane pass occupies residues 309–332 (VGIIAGLVLLGAVITGAVVAAVMW). The Cytoplasmic portion of the chain corresponds to 333–365 (RRKSSDRKGGSYSQAASSDSAQGSDVSLTACKV). Residues 338–365 (DRKGGSYSQAASSDSAQGSDVSLTACKV) form a disordered region. Over residues 342–359 (GSYSQAASSDSAQGSDVS) the composition is skewed to low complexity. Ser343 carries the post-translational modification Phosphoserine. Tyr344 carries the post-translational modification Phosphotyrosine. Residues Ser345, Ser349, Ser352, Ser356, and Ser359 each carry the phosphoserine modification.

This sequence belongs to the MHC class I family. Heterodimer of an alpha chain and a beta chain (beta-2-microglobulin).

It is found in the membrane. Involved in the presentation of foreign antigens to the immune system. The protein is Patr class I histocompatibility antigen, A-126 alpha chain (Patr-A) of Pan troglodytes (Chimpanzee).